A 392-amino-acid polypeptide reads, in one-letter code: MAVVAAAAGWLLRLRAAGAEGHWRRLPGAGLARGFLHPAATVEDAAQRRQVAHFTFQPDPEPREYGQTQKMNLFQSVTSALDNSLAKDPTAVIFGEDVAFGGVFRCTVGLRDKYGKDRVFNTPLCEQGIVGFGIGIAVTGATAIAEIQFADYIFPAFDQIVNEAAKYRYRSGDLFNCGSLTIRSPWGCVGHGALYHSQSPEAFFAHCPGIKVVIPRSPFQAKGLLLSCIEDKNPCIFFEPKILYRAAAEEVPIEPYNIPLSQAEVIQEGSDVTLVAWGTQVHVIREVASMAKEKLGVSCEVIDLRTIIPWDVDTICKSVIKTGRLLISHEAPLTGGFASEISSTVQEECFLNLEAPISRVCGYDTPFPHIFEPFYIPDKWKCYDALRKMINY.

The N-terminal 50 residues, methionine 1–glutamine 50, are a transit peptide targeting the mitochondrion. Tyrosine 152 contributes to the thiamine diphosphate binding site. Residues glycine 178, leucine 180, threonine 181, cysteine 228, and aspartate 231 each contribute to the K(+) site. The residue at position 232 (lysine 232) is an N6-acetyllysine. Residue asparagine 233 participates in K(+) binding. Lysine 241 carries the post-translational modification N6-acetyllysine.

In terms of assembly, heterotetramer of 2 alpha/BCKDHA and 2 beta chains/BCKDHB that forms the branched-chain alpha-keto acid decarboxylase (E1) component of the BCKD complex. The branched-chain alpha-ketoacid dehydrogenase is a large complex composed of three major building blocks E1, E2 and E3. It is organized around E2, a 24-meric cubic core composed of DBT, to which are associated 6 to 12 copies of E1, and approximately 6 copies of the dehydrogenase E3, a DLD dimer. Thiamine diphosphate is required as a cofactor.

Its subcellular location is the mitochondrion matrix. It carries out the reaction N(6)-[(R)-lipoyl]-L-lysyl-[protein] + 3-methyl-2-oxobutanoate + H(+) = N(6)-[(R)-S(8)-2-methylpropanoyldihydrolipoyl]-L-lysyl-[protein] + CO2. In terms of biological role, together with BCKDHA forms the heterotetrameric E1 subunit of the mitochondrial branched-chain alpha-ketoacid dehydrogenase (BCKD) complex. The BCKD complex catalyzes the multi-step oxidative decarboxylation of alpha-ketoacids derived from the branched-chain amino-acids valine, leucine and isoleucine producing CO2 and acyl-CoA which is subsequently utilized to produce energy. The E1 subunit catalyzes the first step with the decarboxylation of the alpha-ketoacid forming an enzyme-product intermediate. A reductive acylation mediated by the lipoylamide cofactor of E2 extracts the acyl group from the E1 active site for the next step of the reaction. This chain is 2-oxoisovalerate dehydrogenase subunit beta, mitochondrial, found in Homo sapiens (Human).